The sequence spans 525 residues: GMP synthase [glutamine-hydrolyzing] (525 aa).

In terms of domain architecture, Glutamine amidotransferase type-1 spans 9 to 207; that stretch reads RILILDFGSQ…VLQLCACEKL (199 aa). Cysteine 86 acts as the Nucleophile in catalysis. Catalysis depends on residues histidine 181 and glutamate 183. One can recognise a GMPS ATP-PPase domain in the interval 208-400; sequence WTPANIVEDA…LGLPYDMVYR (193 aa). 235 to 241 is a binding site for ATP; the sequence is SGGVDSS.

In terms of assembly, homodimer.

It catalyses the reaction XMP + L-glutamine + ATP + H2O = GMP + L-glutamate + AMP + diphosphate + 2 H(+). The protein operates within purine metabolism; GMP biosynthesis; GMP from XMP (L-Gln route): step 1/1. Its function is as follows. Catalyzes the synthesis of GMP from XMP. This chain is GMP synthase [glutamine-hydrolyzing], found in Cellvibrio japonicus (strain Ueda107) (Pseudomonas fluorescens subsp. cellulosa).